Here is a 538-residue protein sequence, read N- to C-terminus: Solute carrier family 2, facilitated glucose transporter member 9 (538 aa).

The Cytoplasmic portion of the chain corresponds to Met1–Ser34. Position 3 is a phosphoserine (Ser3). A helical membrane pass occupies residues Phe35–Tyr54. Asn55 and Asn71 each carry an N-linked (GlcNAc...) asparagine glycan. Topologically, residues Asn55–Thr88 are extracellular. Residues Leu89–Val109 traverse the membrane as a helical segment. Over Lys110–Ser120 the chain is Cytoplasmic. Residues Thr121–Gly143 form a helical membrane-spanning segment. Topologically, residues Thr144 to Leu148 are extracellular. The helical transmembrane segment at Ile149 to Leu170 threads the bilayer. Residues Asn171 to Ser181 are Cytoplasmic-facing. Residues Leu182–Leu200 form a helical membrane-spanning segment. Residues Gly201 to Thr211 are Extracellular-facing. Residues Trp212–Leu233 traverse the membrane as a helical segment. The Cytoplasmic segment spans residues Pro234–Gln297. Residues Val298–Tyr319 traverse the membrane as a helical segment. Over Thr320–Lys333 the chain is Extracellular. The helical transmembrane segment at Ile334–Ile356 threads the bilayer. The Cytoplasmic portion of the chain corresponds to Glu357–Arg362. Residues Pro363–Leu385 form a helical membrane-spanning segment. Topologically, residues Gln386–Pro390 are extracellular. Residues Trp391 to Leu418 form a helical membrane-spanning segment. Topologically, residues Thr419–Pro429 are cytoplasmic. Residues Ala430 to Ile453 form a helical membrane-spanning segment. Topologically, residues Gln454 to Asp458 are extracellular. The chain crosses the membrane as a helical span at residues Ser459–Leu480. Residues Pro481 to Val538 are Cytoplasmic-facing. A disordered region spans residues Phe495–Val538. Positions Asn518–Val538 are enriched in polar residues.

Belongs to the major facilitator superfamily. Sugar transporter (TC 2.A.1.1) family. In terms of processing, N-glycosylated. Highly expressed in the intestine, with high expression in the jejunum and ileum, the segments of the intestine that perform the majority of urate excretion. Isoform 1: Widely expressed. Isoform 1: In kidney, expressed at low levels in proximal tubules. Isoform 2: Primarily expressed in liver and kidney; with specific expression in distal convoluted and connecting tubules of kidney.

The protein localises to the basolateral cell membrane. It is found in the apical cell membrane. It catalyses the reaction urate(out) = urate(in). High-capacity urate transporter, which may play a role in the urate reabsorption by proximal tubules. May have a residual high-affinity, low-capacity glucose and fructose transporter activity. Transports urate at rates 45- to 60-fold faster than glucose. Does not transport galactose. May mediate small uptake of adenine but not of other nucleobases. This is Solute carrier family 2, facilitated glucose transporter member 9 from Mus musculus (Mouse).